The sequence spans 92 residues: uncharacterized protein (92 aa).

In terms of domain architecture, HTH arsR-type spans 1 to 92 (MNGNKDAIFK…LKNLLKGWIE (92 aa)). A DNA-binding region (H-T-H motif) is located at residues 37–61 (IRLITKYDLSITRQAIAKHLSVLED).

This is an uncharacterized protein from Bacillus subtilis (strain 168).